The primary structure comprises 89 residues: Small ribosomal subunit protein uS15 (89 aa).

The protein belongs to the universal ribosomal protein uS15 family. In terms of assembly, part of the 30S ribosomal subunit. Forms a bridge to the 50S subunit in the 70S ribosome, contacting the 23S rRNA.

Its function is as follows. One of the primary rRNA binding proteins, it binds directly to 16S rRNA where it helps nucleate assembly of the platform of the 30S subunit by binding and bridging several RNA helices of the 16S rRNA. Functionally, forms an intersubunit bridge (bridge B4) with the 23S rRNA of the 50S subunit in the ribosome. This chain is Small ribosomal subunit protein uS15, found in Shewanella baltica (strain OS223).